The primary structure comprises 73 residues: Metallothionein-like protein type 2 (73 aa).

The protein belongs to the metallothionein superfamily. Type 15 family.

Its function is as follows. Metallothioneins have a high content of cysteine residues that bind various heavy metals. This chain is Metallothionein-like protein type 2, found in Solanum lycopersicum (Tomato).